The sequence spans 298 residues: MQLEKMITEGSNAASAEIDRVSTLEMCRIINDEDKTVPLAVERVLPDIAAAIDVIHTQVSGGGRLIYLGAGTSGRLGILDASECPPTYGVKPGLVVGLIAGGEYAIQHAVEGAEDSREGGVNDLKNIGLTAQDVVVGIAASGRTPYVIAGLEYARQLGCRTVGISCNPGSAVSTTAEFAITPVVGAEVVTGSSRMKAGTAQKLVLNMLSTGLMIKSGKVFGNLMVDVVATNEKLHVRQVNIVKNATGCSAEQAEAALVACERNCKTAIVMVLKNLDAAEAKKRLDQHGGFIRQVLDKE.

Positions 55–218 (IHTQVSGGGR…STGLMIKSGK (164 aa)) constitute an SIS domain. The active-site Proton donor is Glu83. Residue Glu114 is part of the active site.

It belongs to the GCKR-like family. MurNAc-6-P etherase subfamily. As to quaternary structure, homodimer.

The enzyme catalyses N-acetyl-D-muramate 6-phosphate + H2O = N-acetyl-D-glucosamine 6-phosphate + (R)-lactate. The protein operates within amino-sugar metabolism; 1,6-anhydro-N-acetylmuramate degradation. It functions in the pathway amino-sugar metabolism; N-acetylmuramate degradation. Its pathway is cell wall biogenesis; peptidoglycan recycling. Specifically catalyzes the cleavage of the D-lactyl ether substituent of MurNAc 6-phosphate, producing GlcNAc 6-phosphate and D-lactate. Together with AnmK, is also required for the utilization of anhydro-N-acetylmuramic acid (anhMurNAc) either imported from the medium or derived from its own cell wall murein, and thus plays a role in cell wall recycling. The protein is N-acetylmuramic acid 6-phosphate etherase of Escherichia coli O127:H6 (strain E2348/69 / EPEC).